Reading from the N-terminus, the 312-residue chain is Olfactory receptor 52A1 (312 aa).

Topologically, residues 1-27 are extracellular; it reads MSISNITVYMPSVLTLVGIPGLESVQC. Asn-5 carries an N-linked (GlcNAc...) asparagine glycan. A helical transmembrane segment spans residues 28–48; it reads WIGIPFCAIYLIAMIGNSLLL. At 49–56 the chain is on the cytoplasmic side; sequence SIIKSERS. Residues 57 to 77 form a helical membrane-spanning segment; it reads LHEPLYIFLGMLGATDIALAS. At 78-101 the chain is on the extracellular side; it reads SIMPKMLGIFWFNVPEIYFDSCLL. The cysteines at positions 99 and 182 are disulfide-linked. The chain crosses the membrane as a helical span at residues 102 to 122; that stretch reads QMWFIHTLQGIESGILVAMAL. At 123–141 the chain is on the cytoplasmic side; that stretch reads DRYVAICYPLRHANIFTHQ. Residues 142-162 traverse the membrane as a helical segment; that stretch reads LVIQIGTMVVLRAAILVAPCL. Residues 163–199 lie on the Extracellular side of the membrane; it reads VLIKCRFQFYHTTVISHSYCEHMAIVKLAAANVQVNK. A helical transmembrane segment spans residues 200–220; sequence IYGLFVAFTVAGFDLTFITLS. Topologically, residues 221 to 240 are cytoplasmic; it reads YIQIFITVFRLPQKEARFKA. Residues 241-261 form a helical membrane-spanning segment; sequence FNTCIAHICVFLQFYLLAFFS. The Extracellular segment spans residues 262-276; that stretch reads FFTHRFGSHISPYIH. The chain crosses the membrane as a helical span at residues 277–297; the sequence is ILFSSIYLLVPPFLNPLVYGA. Residues 298–312 lie on the Cytoplasmic side of the membrane; that stretch reads KTTQIRIHVVKMFCS.

Belongs to the G-protein coupled receptor 1 family.

It localises to the cell membrane. In terms of biological role, odorant receptor. This Homo sapiens (Human) protein is Olfactory receptor 52A1 (OR52A1).